The chain runs to 77 residues: Secapin (77 aa).

An N-terminal signal peptide occupies residues 1-32 (MKNYSKNATYLITVLLFSFVAMLLIIPSKCEA). Positions 33–52 (VSNDMQPLEARSADLVPEPR) are excised as a propeptide. A disulfide bridge connects residues Cys61 and Cys72.

Belongs to the secapin family. As to expression, expressed by the venom gland.

The protein localises to the secreted. Nontoxic peptide. The sequence is that of Secapin from Vespa magnifica (Hornet).